Reading from the N-terminus, the 444-residue chain is Beta-D-glucosyl crocetin beta-1,6-glucosyltransferase (444 aa).

His9 functions as the Proton acceptor in the catalytic mechanism. Position 9 (His9) interacts with an anthocyanidin. The active-site Charge relay is the Asp108. Residues Thr130, Ala319, Gln321, His336, Trp339, Asn340, Ser341, Glu344, Asp360, and Gln361 each contribute to the UDP-alpha-D-glucose site.

The protein belongs to the UDP-glycosyltransferase family. Ubiquitous.

The catalysed reaction is beta-D-glucosyl crocetin + UDP-alpha-D-glucose = beta-D-gentiobiosyl crocetin + UDP + H(+). It catalyses the reaction bis(beta-D-glucosyl) crocetin + UDP-alpha-D-glucose = beta-D-gentiobiosyl beta-D-glucosyl crocetin + UDP + H(+). It carries out the reaction beta-D-gentiobiosyl beta-D-glucosyl crocetin + UDP-alpha-D-glucose = bis(beta-D-gentiobiosyl) crocetin + UDP + H(+). Its function is as follows. Glucosyltransferase catalyzing the beta 1-6 glucosylation of the sugar moiety of crocetin glucosyl esters to produce crocetin gentiobiosyl esters. Weak activity toward curcumin glucosides, but no activity with flavonoid glucosides, coumarin glucosides, 4-nitrophenyl glucoside or crocetin. Involved with UGT75L6 in sequential glycosylation of crocetin to crocin (bis(beta-D-gentiobiosyl) crocetin). The protein is Beta-D-glucosyl crocetin beta-1,6-glucosyltransferase (UGT94E5) of Gardenia jasminoides (Cape jasmine).